The following is a 356-amino-acid chain: MAGLALYCRTGFEKDLANEVVEKCAELNVYGYPELKTNSGLVLFQCYQAEDADKLAKTLPLTTLIFARQLFAFSERCEQLDTSDRIGPILNGCIEFPECGELRVEHADSTQGREISKFCRKISVPLRQALRGKRILTPLERSNLPVCHVYFEDSTTAIVGYSYPANNSSYPLGILRLKFPNEAPSRSTLKLDEAFQLFIPKKEQAKRLSGGLHAVDLGACPGGWTYQLVKRGMFVEAVDNGAMDEALMATGQVRYCPEDGFKFQPRKNNVYWLVCDMIEQPQRVAKLMATWIATKRCQETVFNLKLPMKKRYESVKEALQIIDQCIDQHRAGPYDLKVKHLYHDREEVTVHMRLNT.

S-adenosyl-L-methionine contacts are provided by residues S187, 220–223 (CPGG), D239, D259, and D276. The active-site Proton acceptor is K305.

The protein belongs to the class I-like SAM-binding methyltransferase superfamily. RNA methyltransferase RlmE family. RlmM subfamily. As to quaternary structure, monomer.

The protein localises to the cytoplasm. It carries out the reaction cytidine(2498) in 23S rRNA + S-adenosyl-L-methionine = 2'-O-methylcytidine(2498) in 23S rRNA + S-adenosyl-L-homocysteine + H(+). Catalyzes the 2'-O-methylation at nucleotide C2498 in 23S rRNA. This is Ribosomal RNA large subunit methyltransferase M from Pseudoalteromonas atlantica (strain T6c / ATCC BAA-1087).